The following is a 472-amino-acid chain: 7-dimethylallyltryptophan synthase hasE (472 aa).

Glu138 lines the L-tryptophan pocket. 8 residues coordinate dimethylallyl diphosphate: Arg154, Lys239, Tyr241, Lys313, Tyr315, Tyr393, Tyr460, and Tyr464.

It belongs to the tryptophan dimethylallyltransferase family. Homodimer.

It carries out the reaction L-tryptophan + dimethylallyl diphosphate = 7-(3-methylbut-2-enyl)-L-tryptophan + diphosphate. It catalyses the reaction an N-terminal L-tryptophanyl-L-alpha-aminoacyl-[peptide] + H2O = an N-terminal L-alpha-aminoacyl-[peptide] + L-tryptophan. Its pathway is secondary metabolite biosynthesis. 7-dimethylallyltryptophan synthase; part of the gene cluster that mediates the biosynthesis of hexadehydro-astechrome (HAS), a tryptophan-derived iron(III)-complex that acts as a virulence factor in infected mice. Catalyzes the prenylation of L-tryptophan at the C-7 position of the indole moiety. The enzyme is specific for dimethylallyl diphosphate (DMAPP) as prenyl donor. Also accepts D-tryptophan, typtophan-derivatives with modifications at the side chain or the indole ring, and linear and cyclic dipeptides such as H-L-Trp-L-Gly-OH or cyclo-L-Trp-L-Gly as substrates, however with lower efficiency. Also has tryptophan aminopeptidase activity towards linear peptides with a tryptophanyl moiety at the N-terminus. Dipeptides are better substrates than peptides with 3 or more amino acids. Enzymatic rate constants however are much higher for the prenyltransferase activity than for the aminopeptidase activity. Within the hexadehydro-astechrome biosyntetic pathway, hasE catalyzes the prenylation of the hasD-tethered tryptophan or the resulting tethered Trp-Ala dipeptid. The HAS biosynthesis begins with the synthesis of a tethered Trp-Ala dipeptide by the NRPS hasD. The 7-dimethylallyltryptophan synthase hasE then catalyzes the prenylation of the hasD-tethered tryptophan or the resulting tethered Trp-Ala dipeptide at the C-7 position of the indole moiety. HAS biosynthesis continues via tethered intermediates with the succesive actions of the cytochrome P450 monooxygenase hasH, the O-methyltransferase hasC, and the FAD-linked oxidoreductase hasG. The resulting O-methylated diketopiperazine is then released from hasD. Finally, three O-methylated diketopiperazine molecules assemble in a trimeric complex with Fe(III) to produce hexadehydro-astechrome. The chain is 7-dimethylallyltryptophan synthase hasE from Aspergillus fumigatus (strain CBS 144.89 / FGSC A1163 / CEA10) (Neosartorya fumigata).